Here is a 314-residue protein sequence, read N- to C-terminus: Secreted frizzled-related protein 1 (314 aa).

The first 31 residues, 1-31, serve as a signal peptide directing secretion; the sequence is MGVGRSARGRGGAASGVLLALAAALLAAGSA. The 117-residue stretch at 53-169 folds into the FZ domain; sequence TKPPQCVDIP…FPEGDVCIAM (117 aa). 5 disulfide bridges follow: Cys58-Cys121, Cys68-Cys114, Cys105-Cys140, Cys129-Cys166, and Cys133-Cys157. Asn173 is a glycosylation site (N-linked (GlcNAc...) asparagine). 3 disulfide bridges follow: Cys186/Cys256, Cys189/Cys258, and Cys203/Cys306. Positions 186–306 constitute an NTR domain; the sequence is CPPCDNELKS…FMKRMKNHEC (121 aa).

Belongs to the secreted frizzled-related protein (sFRP) family. As to quaternary structure, interacts with WNT8, WNT1, WNT2, WNT4 and FRZD6. Interacts with MYOC. In terms of tissue distribution, highly expressed in kidney and embryonic heart. Also highly expressed in the eye, where it is principally localized to the ciliary body and the lens epithelium. Weaker expression in heart, lung and brain. In the brain, is expressed exclusively in the choroid plexus.

The protein localises to the secreted. Soluble frizzled-related proteins (sFRPS) function as modulators of Wnt signaling through direct interaction with Wnts. They have a role in regulating cell growth and differentiation in specific cell types. SFRP1 decreases intracellular beta-catenin levels. Has antiproliferative effects on vascular cells, in vitro and in vivo, and can induce, in vivo, an angiogenic response. In vascular cell cycle, delays the G1 phase and entry into the S phase. In kidney development, inhibits tubule formation and bud growth in metanephroi. Inhibits WNT1/WNT4-mediated TCF-dependent transcription. This chain is Secreted frizzled-related protein 1, found in Mus musculus (Mouse).